Consider the following 292-residue polypeptide: Glycine--tRNA ligase alpha subunit (292 aa).

Belongs to the class-II aminoacyl-tRNA synthetase family. In terms of assembly, tetramer of two alpha and two beta subunits.

It is found in the cytoplasm. It carries out the reaction tRNA(Gly) + glycine + ATP = glycyl-tRNA(Gly) + AMP + diphosphate. This Geobacter sulfurreducens (strain ATCC 51573 / DSM 12127 / PCA) protein is Glycine--tRNA ligase alpha subunit.